A 104-amino-acid polypeptide reads, in one-letter code: Type IV secretion system protein PtlB homolog (104 aa).

A helical transmembrane segment spans residues 30 to 50; the sequence is IALLGIWFSIAFLALFPVALL.

It belongs to the virB3 family.

It is found in the cell membrane. This Bordetella parapertussis (strain 12822 / ATCC BAA-587 / NCTC 13253) protein is Type IV secretion system protein PtlB homolog (ptlB).